Reading from the N-terminus, the 226-residue chain is Large ribosomal subunit protein uL1 (226 aa).

It belongs to the universal ribosomal protein uL1 family. In terms of assembly, part of the 50S ribosomal subunit.

Binds directly to 23S rRNA. The L1 stalk is quite mobile in the ribosome, and is involved in E site tRNA release. Functionally, protein L1 is also a translational repressor protein, it controls the translation of the L11 operon by binding to its mRNA. The chain is Large ribosomal subunit protein uL1 from Mycoplasma pneumoniae (strain ATCC 29342 / M129 / Subtype 1) (Mycoplasmoides pneumoniae).